Reading from the N-terminus, the 788-residue chain is LPS-assembly protein LptD (788 aa).

The first 24 residues, 1-24 (MKKRFPTLLATLIWTALYSQHTLA), serve as a signal peptide directing secretion.

This sequence belongs to the LptD family. As to quaternary structure, component of the lipopolysaccharide transport and assembly complex. Interacts with LptE and LptA.

The protein localises to the cell outer membrane. Its function is as follows. Together with LptE, is involved in the assembly of lipopolysaccharide (LPS) at the surface of the outer membrane. The chain is LPS-assembly protein LptD from Yersinia enterocolitica serotype O:8 / biotype 1B (strain NCTC 13174 / 8081).